The chain runs to 345 residues: Histidinol-phosphate aminotransferase (345 aa).

Lys-206 carries the N6-(pyridoxal phosphate)lysine modification.

It belongs to the class-II pyridoxal-phosphate-dependent aminotransferase family. Histidinol-phosphate aminotransferase subfamily. In terms of assembly, homodimer. It depends on pyridoxal 5'-phosphate as a cofactor.

It catalyses the reaction L-histidinol phosphate + 2-oxoglutarate = 3-(imidazol-4-yl)-2-oxopropyl phosphate + L-glutamate. Its pathway is amino-acid biosynthesis; L-histidine biosynthesis; L-histidine from 5-phospho-alpha-D-ribose 1-diphosphate: step 7/9. This chain is Histidinol-phosphate aminotransferase, found in Bacteroides fragilis (strain ATCC 25285 / DSM 2151 / CCUG 4856 / JCM 11019 / LMG 10263 / NCTC 9343 / Onslow / VPI 2553 / EN-2).